The primary structure comprises 144 residues: MKKITGIVKLQLPAGKATPAPPVGPALGQYGANIMEFTKAFNAQTADKGDAIIPVEITIFADRSFTFITKTPPMSYLIRKAAGLSKGSATPNKAKVGKLNWEQVLEIAKTKMPDLNAGSLEAAANTVAGTARSMGVTIEGAPNA.

The protein belongs to the universal ribosomal protein uL11 family. As to quaternary structure, part of the ribosomal stalk of the 50S ribosomal subunit. Interacts with L10 and the large rRNA to form the base of the stalk. L10 forms an elongated spine to which L12 dimers bind in a sequential fashion forming a multimeric L10(L12)X complex. In terms of processing, one or more lysine residues are methylated.

Forms part of the ribosomal stalk which helps the ribosome interact with GTP-bound translation factors. This Deinococcus deserti (strain DSM 17065 / CIP 109153 / LMG 22923 / VCD115) protein is Large ribosomal subunit protein uL11.